A 282-amino-acid chain; its full sequence is PTS system sorbose-specific EIID component (282 aa).

One can recognise a PTS EIID domain in the interval 13–281 (TKITKGDMFK…GIVGYWLGIL (269 aa)). 4 helical membrane-spanning segments follow: residues 135 to 155 (LGAS…FVAF), 197 to 217 (GLFI…PLVV), 234 to 254 (ILDQ…CMYL), and 261 to 281 (PILL…LGIL).

It localises to the cell membrane. Its function is as follows. The phosphoenolpyruvate-dependent sugar phosphotransferase system (PTS), a major carbohydrate active transport system, catalyzes the phosphorylation of incoming sugar substrates concomitant with their translocation across the cell membrane. The enzyme II SorABCD PTS system is involved in L-sorbose transport. The protein is PTS system sorbose-specific EIID component of Lacticaseibacillus casei (Lactobacillus casei).